Consider the following 115-residue polypeptide: NADH-ubiquinone oxidoreductase chain 3 (115 aa).

3 helical membrane-spanning segments follow: residues 4–24, 55–75, and 87–107; these read LMVMLVNITLSSCLIMIAFWL, FFLVAITFFLFDLEIALLLPL, and MMLTAFILVSVLALGLAYEWM.

The protein belongs to the complex I subunit 3 family. In terms of assembly, core subunit of respiratory chain NADH dehydrogenase (Complex I) which is composed of 45 different subunits. Interacts with TMEM186. Interacts with TMEM242.

The protein resides in the mitochondrion inner membrane. It catalyses the reaction a ubiquinone + NADH + 5 H(+)(in) = a ubiquinol + NAD(+) + 4 H(+)(out). Its function is as follows. Core subunit of the mitochondrial membrane respiratory chain NADH dehydrogenase (Complex I) which catalyzes electron transfer from NADH through the respiratory chain, using ubiquinone as an electron acceptor. Essential for the catalytic activity of complex I. This is NADH-ubiquinone oxidoreductase chain 3 from Peromyscus mexicanus (Mexican deer mouse).